Consider the following 150-residue polypeptide: Flagellar assembly factor FliW (150 aa).

It belongs to the FliW family. Interacts with translational regulator CsrA and flagellin(s).

The protein localises to the cytoplasm. Functionally, acts as an anti-CsrA protein, binds CsrA and prevents it from repressing translation of its target genes, one of which is flagellin. Binds to flagellin and participates in the assembly of the flagellum. This chain is Flagellar assembly factor FliW, found in Caldanaerobacter subterraneus subsp. tengcongensis (strain DSM 15242 / JCM 11007 / NBRC 100824 / MB4) (Thermoanaerobacter tengcongensis).